The chain runs to 314 residues: Methenyltetrahydromethanopterin cyclohydrolase (314 aa).

Belongs to the MCH family.

Its subcellular location is the cytoplasm. It carries out the reaction 5,10-methenyl-5,6,7,8-tetrahydromethanopterin + H2O = N(5)-formyl-5,6,7,8-tetrahydromethanopterin + H(+). Its pathway is one-carbon metabolism; methanogenesis from CO(2); 5,10-methenyl-5,6,7,8-tetrahydromethanopterin from CO(2): step 3/3. Its function is as follows. Catalyzes the reversible interconversion of 5-formyl-H(4)MPT to methenyl-H(4)MPT(+). This is Methenyltetrahydromethanopterin cyclohydrolase from Methanocorpusculum labreanum (strain ATCC 43576 / DSM 4855 / Z).